Here is a 247-residue protein sequence, read N- to C-terminus: tRNA pseudouridine synthase A (247 aa).

The Nucleophile role is filled by Asp52. Tyr110 is a binding site for substrate.

The protein belongs to the tRNA pseudouridine synthase TruA family. In terms of assembly, homodimer.

The catalysed reaction is uridine(38/39/40) in tRNA = pseudouridine(38/39/40) in tRNA. Formation of pseudouridine at positions 38, 39 and 40 in the anticodon stem and loop of transfer RNAs. The protein is tRNA pseudouridine synthase A of Hyphomonas neptunium (strain ATCC 15444).